The primary structure comprises 418 residues: UDP-N-acetylglucosamine 1-carboxyvinyltransferase (418 aa).

22–23 (KN) is a binding site for phosphoenolpyruvate. Residue arginine 92 participates in UDP-N-acetyl-alpha-D-glucosamine binding. The active-site Proton donor is the cysteine 116. A 2-(S-cysteinyl)pyruvic acid O-phosphothioketal modification is found at cysteine 116. Residues aspartate 305 and valine 327 each coordinate UDP-N-acetyl-alpha-D-glucosamine.

It belongs to the EPSP synthase family. MurA subfamily.

It localises to the cytoplasm. It catalyses the reaction phosphoenolpyruvate + UDP-N-acetyl-alpha-D-glucosamine = UDP-N-acetyl-3-O-(1-carboxyvinyl)-alpha-D-glucosamine + phosphate. Its pathway is cell wall biogenesis; peptidoglycan biosynthesis. Cell wall formation. Adds enolpyruvyl to UDP-N-acetylglucosamine. This is UDP-N-acetylglucosamine 1-carboxyvinyltransferase from Endomicrobium trichonymphae.